The following is an 84-amino-acid chain: Small ribosomal subunit protein uS17c (84 aa).

This sequence belongs to the universal ribosomal protein uS17 family. In terms of assembly, part of the 30S ribosomal subunit.

It is found in the plastid. It localises to the chloroplast. Functionally, one of the primary rRNA binding proteins, it binds specifically to the 5'-end of 16S ribosomal RNA. In Thalassiosira pseudonana (Marine diatom), this protein is Small ribosomal subunit protein uS17c (rps17).